The chain runs to 339 residues: MKFLDQAKVYVRSGSGGAGAVSFRREKFIEFGGPDGGNGGRGGDVWALVVDGLNTLIDYRYQQHFRAKNGGHGKGRNMTGAKGDDVVLRVPVGTQIFEEDNKTLICDLTEVGQRYCLAKGGNGGFGNLHFVTSTNRAPRRANPGLSGEERALWLRLKLIADGGIIGLPNAGKSTFLASVTTAKPKIAAYPFTTLYPHLGVARIDAREFVLADIPGLIEGAHEGVGIGDRFLGHVERCRVLLHLISIQEEDVVKAYQIIRRELETYGNNLSDKTEIVALSQVDTLPIEECKAKQEALQKSVGQPVMMFSAVSHEGLDNVLRSVAHVIEMARADMINKHQD.

The region spanning 1 to 159 is the Obg domain; it reads MKFLDQAKVY…RALWLRLKLI (159 aa). The region spanning 160 to 327 is the OBG-type G domain; that stretch reads ADGGIIGLPN…VLRSVAHVIE (168 aa). GTP is bound by residues 166–173, 191–195, 212–215, 279–282, and 308–310; these read GLPNAGKS, FTTLY, DIPG, SQVD, and SAV. Mg(2+)-binding residues include S173 and T193.

Belongs to the TRAFAC class OBG-HflX-like GTPase superfamily. OBG GTPase family. As to quaternary structure, monomer. Mg(2+) serves as cofactor.

It localises to the cytoplasm. In terms of biological role, an essential GTPase which binds GTP, GDP and possibly (p)ppGpp with moderate affinity, with high nucleotide exchange rates and a fairly low GTP hydrolysis rate. Plays a role in control of the cell cycle, stress response, ribosome biogenesis and in those bacteria that undergo differentiation, in morphogenesis control. The chain is GTPase Obg from Bartonella bacilliformis (strain ATCC 35685 / KC583 / Herrer 020/F12,63).